The following is a 545-amino-acid chain: Chaperonin GroEL (545 aa).

ATP contacts are provided by residues 30-33, Lys51, 87-91, Gly415, and Asp496; these read TLGP and DGTTT.

This sequence belongs to the chaperonin (HSP60) family. In terms of assembly, forms a cylinder of 14 subunits composed of two heptameric rings stacked back-to-back. Interacts with the co-chaperonin GroES.

Its subcellular location is the cytoplasm. It catalyses the reaction ATP + H2O + a folded polypeptide = ADP + phosphate + an unfolded polypeptide.. Functionally, together with its co-chaperonin GroES, plays an essential role in assisting protein folding. The GroEL-GroES system forms a nano-cage that allows encapsulation of the non-native substrate proteins and provides a physical environment optimized to promote and accelerate protein folding. In Chlorobaculum tepidum (strain ATCC 49652 / DSM 12025 / NBRC 103806 / TLS) (Chlorobium tepidum), this protein is Chaperonin GroEL.